We begin with the raw amino-acid sequence, 147 residues long: Male-specific protein scotti (147 aa).

Residues Glu-57 to Arg-76 are disordered. Asn-128 carries N-linked (GlcNAc...) asparagine glycosylation.

The protein belongs to the male-specific scotti family.

Its function is as follows. Post-meiotically transcribed gene that has a role in late spermiogenesis; required for actin cone progression during spermatid individualization. The protein is Male-specific protein scotti of Drosophila simulans (Fruit fly).